We begin with the raw amino-acid sequence, 334 residues long: DNA polymerase beta (334 aa).

The K(+) site is built by Lys-60, Leu-62, and Val-65. Na(+)-binding residues include Lys-60, Leu-62, and Val-65. The active-site Nucleophile; Schiff-base intermediate with DNA; for 5'-dRP lyase activity is Lys-72. Omega-N-methylarginine; by PRMT6 is present on Arg-83. Residues Thr-101, Val-103, and Ile-106 each contribute to the K(+) site. Na(+) contacts are provided by Thr-101, Val-103, and Ile-106. Arg-149 provides a ligand contact to a 2'-deoxyribonucleoside 5'-triphosphate. Arg-152 is subject to Omega-N-methylarginine; by PRMT6. A 2'-deoxyribonucleoside 5'-triphosphate is bound by residues Ser-180, Arg-183, Gly-189, and Asp-190. The segment at 183–192 (RGAESSGDMD) is DNA-binding. The Mg(2+) site is built by Asp-190, Asp-192, and Asp-255.

This sequence belongs to the DNA polymerase type-X family. As to quaternary structure, monomer. Mg(2+) serves as cofactor. Post-translationally, methylation by PRMT6 stimulates the polymerase activity by enhancing DNA binding and processivity. In terms of processing, ubiquitinated: monoubiquitinated by huwe1/arf-bp1. Monoubiquitinated protein is then the target of stub1/chip, which catalyzes polyubiquitination from monoubiquitin, leading to degradation by the proteasome. usp47 mediates the deubiquitination of monoubiquitinated protein, preventing polyubiquitination by STUB1/CHIP and its subsequent degradation.

The protein localises to the nucleus. It localises to the cytoplasm. The catalysed reaction is DNA(n) + a 2'-deoxyribonucleoside 5'-triphosphate = DNA(n+1) + diphosphate. The enzyme catalyses a 5'-end 2'-deoxyribose-2'-deoxyribonucleotide-DNA = (2E,4S)-4-hydroxypenten-2-al-5-phosphate + a 5'-end 5'-phospho-2'-deoxyribonucleoside-DNA + H(+). It catalyses the reaction 2'-deoxyribonucleotide-(2'-deoxyribose 5'-phosphate)-2'-deoxyribonucleotide-DNA = a 3'-end 2'-deoxyribonucleotide-(2,3-dehydro-2,3-deoxyribose 5'-phosphate)-DNA + a 5'-end 5'-phospho-2'-deoxyribonucleoside-DNA + H(+). Repair polymerase that plays a key role in base-excision repair. During this process, the damaged base is excised by specific DNA glycosylases, the DNA backbone is nicked at the abasic site by an apurinic/apyrimidic (AP) endonuclease, and POLB removes 5'-deoxyribose-phosphate from the preincised AP site acting as a 5'-deoxyribose-phosphate lyase (5'-dRP lyase); through its DNA polymerase activity, it adds one nucleotide to the 3' end of the arising single-nucleotide gap. Conducts 'gap-filling' DNA synthesis in a stepwise distributive fashion rather than in a processive fashion as for other DNA polymerases. It is also able to cleave sugar-phosphate bonds 3' to an intact AP site, acting as an AP lyase. The sequence is that of DNA polymerase beta (polb) from Xenopus laevis (African clawed frog).